Here is a 211-residue protein sequence, read N- to C-terminus: MQTPHKEHLYKLLVIGDLGVGKTSIIKRYVHQNFSSHYRATIGVDFALKVLHWDPETVVRLQLWDIAGQERFGNMTRVYYREAMGAFIVFDVTRPATFEAVAKWKNDLDSKLTLPNGKPVSVVLLANKCDQGKDVLMNNGLKMDQFCKEHGFVGWFETSAKENINIDEASRCLVKHILANECDLLESIEPDIVKPHLTSPKVVSCSGCAKS.

Positions 19, 20, 21, 22, 23, 24, 35, 36, 38, and 41 each coordinate GTP. Residue threonine 23 participates in Mg(2+) binding. Residues 32 to 46 (QNFSSHYRATIGVDF) carry the Switch 1 motif. Mg(2+) is bound by residues threonine 41 and aspartate 65. Glycine 68, lysine 128, aspartate 130, alanine 160, and lysine 161 together coordinate GTP. The Switch 2 signature appears at 68 to 81 (GQERFGNMTRVYYR). Residue cysteine 205 is the site of S-palmitoyl cysteine attachment. Cysteine 208 is lipidated: S-geranylgeranyl cysteine.

The protein belongs to the small GTPase superfamily. Rab family. In terms of assembly, interacts with ANKRD27. The cofactor is Mg(2+).

Its subcellular location is the cell membrane. It is found in the cytoplasmic vesicle. The protein resides in the phagosome. The protein localises to the phagosome membrane. It localises to the melanosome. Its subcellular location is the melanosome membrane. The catalysed reaction is GTP + H2O = GDP + phosphate + H(+). With respect to regulation, regulated by guanine nucleotide exchange factors (GEFs) including the BLOC-3 complex composed of HPS1 and HPS4 which promote the exchange of bound GDP for free GTP. Regulated by GTPase activating proteins (GAPs) including SGSM2 which increase the GTP hydrolysis activity. Inhibited by GDP dissociation inhibitors (GDIs). Functionally, the small GTPases Rab are key regulators of intracellular membrane trafficking, from the formation of transport vesicles to their fusion with membranes. Rabs cycle between an inactive GDP-bound form and an active GTP-bound form that is able to recruit to membranes different sets of downstream effectors directly responsible for vesicle formation, movement, tethering and fusion. RAB38 plays a role in the maturation of phagosomes that engulf pathogens, such as S.aureus and Mycobacterium. May be involved in melanosomal transport and docking. Involved in the proper sorting of TYRP1. Involved in peripheral melanosomal distribution of TYRP1 in melanocytes; the function, which probably is implicating vesicle-trafficking, includes cooperation with ANKRD27 and VAMP7. Plays an important role in the control of melanin production and melanosome biogenesis. In concert with RAB32, regulates the proper trafficking of melanogenic enzymes TYR, TYRP1 and DCT/TYRP2 to melanosomes in melanocytes. This is Ras-related protein Rab-38 from Mus musculus (Mouse).